The chain runs to 137 residues: Large ribosomal subunit protein uL16c (137 aa).

The protein belongs to the universal ribosomal protein uL16 family. In terms of assembly, part of the 50S ribosomal subunit.

It localises to the plastid. The chain is Large ribosomal subunit protein uL16c (rpl16) from Helicosporidium sp. subsp. Simulium jonesii (Green alga).